The chain runs to 524 residues: Probable myosin-binding protein 5 (524 aa).

A helical transmembrane segment spans residues F20 to L40. The region spanning S299–R397 is the GTD-binding domain. Positions S462–Q490 form a coiled coil.

The protein resides in the membrane. Its function is as follows. Probable membrane-anchored myosin receptors. The chain is Probable myosin-binding protein 5 from Arabidopsis thaliana (Mouse-ear cress).